Reading from the N-terminus, the 32-residue chain is U3-cyrtautoxin-As1a (32 aa).

Disulfide bonds link cysteine 4-cysteine 19, cysteine 11-cysteine 24, and cysteine 18-cysteine 29.

Belongs to the neurotoxin 14 (magi-1) family. This sequence to aptotoxin III. Expressed by the venom gland.

The protein localises to the secreted. In terms of biological role, is both paralytic and lethal, when injected into lepidopteran larvae. Is a slower acting toxin, being lethal at 24 hours, but not paralytic at 1 hour post-injection. This Apomastus schlingeri (Trap-door spider) protein is U3-cyrtautoxin-As1a.